The sequence spans 139 residues: Small ribosomal subunit protein bS16 (139 aa).

Positions 84 to 139 are disordered; that stretch reads KGEPAPAPLLQPAEKAARPSFEAIGGEDEGKGEAITQKKKADKRDEAAAESSASEA.

It belongs to the bacterial ribosomal protein bS16 family.

The sequence is that of Small ribosomal subunit protein bS16 from Streptomyces lividans.